The chain runs to 274 residues: 4-hydroxy-tetrahydrodipicolinate reductase (274 aa).

Glycine 7–methionine 12 is an NAD(+) binding site. Arginine 40 lines the NADP(+) pocket. NAD(+) contacts are provided by residues glycine 103–threonine 105 and serine 127–phenylalanine 130. Histidine 160 serves as the catalytic Proton donor/acceptor. Histidine 161 is a (S)-2,3,4,5-tetrahydrodipicolinate binding site. The active-site Proton donor is lysine 164. Residue glycine 170–threonine 171 participates in (S)-2,3,4,5-tetrahydrodipicolinate binding.

This sequence belongs to the DapB family. In terms of assembly, homotetramer.

Its subcellular location is the cytoplasm. It catalyses the reaction (S)-2,3,4,5-tetrahydrodipicolinate + NAD(+) + H2O = (2S,4S)-4-hydroxy-2,3,4,5-tetrahydrodipicolinate + NADH + H(+). The enzyme catalyses (S)-2,3,4,5-tetrahydrodipicolinate + NADP(+) + H2O = (2S,4S)-4-hydroxy-2,3,4,5-tetrahydrodipicolinate + NADPH + H(+). It participates in amino-acid biosynthesis; L-lysine biosynthesis via DAP pathway; (S)-tetrahydrodipicolinate from L-aspartate: step 4/4. In terms of biological role, catalyzes the conversion of 4-hydroxy-tetrahydrodipicolinate (HTPA) to tetrahydrodipicolinate. This Blochmanniella floridana protein is 4-hydroxy-tetrahydrodipicolinate reductase.